The following is an 87-amino-acid chain: Small ribosomal subunit protein bS20 (87 aa).

The disordered stretch occupies residues 1–22 (MANTSQARKRARQAGVRRVRNA). Residues 7–20 (ARKRARQAGVRRVR) are compositionally biased toward basic residues.

The protein belongs to the bacterial ribosomal protein bS20 family.

Its function is as follows. Binds directly to 16S ribosomal RNA. The polypeptide is Small ribosomal subunit protein bS20 (Nitrosococcus oceani (strain ATCC 19707 / BCRC 17464 / JCM 30415 / NCIMB 11848 / C-107)).